The sequence spans 319 residues: Methionyl-tRNA formyltransferase (319 aa).

116-119 is a binding site for (6S)-5,6,7,8-tetrahydrofolate; that stretch reads SLLP.

It belongs to the Fmt family.

The catalysed reaction is L-methionyl-tRNA(fMet) + (6R)-10-formyltetrahydrofolate = N-formyl-L-methionyl-tRNA(fMet) + (6S)-5,6,7,8-tetrahydrofolate + H(+). Attaches a formyl group to the free amino group of methionyl-tRNA(fMet). The formyl group appears to play a dual role in the initiator identity of N-formylmethionyl-tRNA by promoting its recognition by IF2 and preventing the misappropriation of this tRNA by the elongation apparatus. The sequence is that of Methionyl-tRNA formyltransferase from Wigglesworthia glossinidia brevipalpis.